Reading from the N-terminus, the 266-residue chain is F-box/kelch-repeat protein At4g39560 (266 aa).

In terms of domain architecture, F-box spans 24–70 (STQILSLPVDLLISILARVSRLDYPILSLVSKSFRSLIASPELYETR). 3 Kelch repeats span residues 130–176 (DIYN…VIDG), 178–223 (IYVA…KSAV), and 226–266 (EAIC…LLVA).

The protein is F-box/kelch-repeat protein At4g39560 of Arabidopsis thaliana (Mouse-ear cress).